We begin with the raw amino-acid sequence, 404 residues long: DNA polymerase processivity factor BMRF1 (404 aa).

The tract at residues 1 to 300 (METTQTLRFK…SVILFNHASE (300 aa)) is homodimerization; DNA binding and DNA polymerase processivity. The interval 301–404 (EAAASTASEP…KVKQAFNPLI (104 aa)) is transcriptional activation. Positions 302 to 404 (AAASTASEPE…KVKQAFNPLI (103 aa)) are disordered. Residues 335–344 (SPSPPPPPRT) are compositionally biased toward pro residues. At Ser-337 the chain carries Phosphoserine. Thr-344 carries the post-translational modification Phosphothreonine. The residue at position 349 (Ser-349) is a Phosphoserine. Thr-355 is subject to Phosphothreonine.

This sequence belongs to the herpesviridae DNA polymerase accessory subunit family. As to quaternary structure, homodimer. Two dimers can adopt a tetrameric ring-like structure. Forms a complex with the DNA-binding protein BALF2, the DNA polymerase subunit BALF5, and the alkaline exonuclease BGLF5. Interacts (via N-terminus) with BZLF1 (via bZIP domain); this interaction may inhibit BZLF1-induced transcription of the BMRF1 promoter. Interacts (via C-terminus) with host NuRD complex; this interaction is important for transcriptional activation of EBV promoters and inhibition of the ubiquitination step of DDR signaling. Phosphorylated by the viral BGLF4 kinase.

The protein resides in the virion tegument. It localises to the host nucleus. In terms of biological role, acts as a DNA polymerase processivity factor; a transcriptional activator for several EBV promoters and inhibits the host DNA damage response (DDR) to double-stranded DNA breaks. Plays an essential role in the viral lytic DNA replication by acting as a polymerase accessory subunit. Stimulates the viral DNA polymerase activity and appears to function with it as a holoenzyme. Increases the processivity of the viral polymerase, probably by acting as a sliding clamp that prevents dissociation of the polymerase from the active template. In addition, BMRF1 transcriptionally activates the oriLyt early BHLF1 promoter. Promotes G1/S cell cycle arrest through p53 induction. The sequence is that of DNA polymerase processivity factor BMRF1 from Epstein-Barr virus (strain AG876) (HHV-4).